We begin with the raw amino-acid sequence, 666 residues long: ESX-1 secretion-associated protein EspI (666 aa).

Basic and acidic residues predominate over residues 1–15 (MAADYDKLFRPHEGM). The tract at residues 1 to 378 (MAADYDKLFR…ATKPPKVVSQ (378 aa)) is disordered. Positions 22–31 (AAQPFFDPSA) are enriched in low complexity. Composition is skewed to pro residues over residues 64-80 (APPP…PTPM), 87-144 (PPSP…PAPT), and 188-205 (PAPP…PAPS). Residues 222 to 231 (HSRRARRGHR) show a composition bias toward basic residues. The segment covering 284 to 297 (PTRPAPTEPPPSPS) has biased composition (pro residues). A compositionally biased stretch (basic residues) spans 357-371 (PKVKKVKPQKPKATK). 424–431 (LKGGAGKT) is a binding site for ATP.

In terms of biological role, required to repress ESX-1-mediated secretion under low ATP conditions. This function requires the ATP-binding motif. In Mycobacterium tuberculosis (strain CDC 1551 / Oshkosh), this protein is ESX-1 secretion-associated protein EspI.